The sequence spans 119 residues: 5-hydroxyisourate hydrolase (119 aa).

Substrate is bound by residues His8, Arg47, and Tyr116.

It belongs to the transthyretin family. 5-hydroxyisourate hydrolase subfamily. Homotetramer.

It carries out the reaction 5-hydroxyisourate + H2O = 5-hydroxy-2-oxo-4-ureido-2,5-dihydro-1H-imidazole-5-carboxylate + H(+). It participates in purine metabolism; urate degradation; (S)-allantoin from urate: step 2/3. Functionally, catalyzes the hydrolysis of 5-hydroxyisourate (HIU) to 2-oxo-4-hydroxy-4-carboxy-5-ureidoimidazoline (OHCU). This is 5-hydroxyisourate hydrolase from Halalkalibacterium halodurans (strain ATCC BAA-125 / DSM 18197 / FERM 7344 / JCM 9153 / C-125) (Bacillus halodurans).